The following is a 398-amino-acid chain: MKDKNIKISGNFVRIHLSGSFLKFQSIYNLKKLYLQLVILTIVAFFWGLLGVIFVQFSGLYDIGMASISQGLARLVNFFITSQNINVDSATIFNAIFWLTQILFNVPFFIFGWFKISKKFTLLTLYFVAVSNLFGFFFSYIPGIDNFFLFANLTTAKDGGFENLINEKGVQLIFWEKSAEKQVSLLFYGLIWGFLQAVFYSVILIIDASTGGLDFLAFWYSEKKYKDIGGILMLINTVSFIIGYVIGTYLTGSLSVQSYVGDDKHQPFGVAFFLSPNLVFTLLMNIVLGLFTSFYFPKYQFVKVEVYGKHIEKIRNYLLDNQQWFSITMFEAEGGYSRQKTQVLVTNCLLIKAAKLLEDVRKFDRDALFSITFIKKLDGYIYDRRTNKQTKHGTENKS.

6 helical membrane passes run 37-57 (LVIL…FVQF), 92-112 (IFNA…FIFG), 122-142 (LLTL…SYIP), 186-206 (LFYG…ILII), 228-248 (IGGI…VIGT), and 268-288 (FGVA…NIVL).

It localises to the cell membrane. This is an uncharacterized protein from Mycoplasma genitalium (strain ATCC 33530 / DSM 19775 / NCTC 10195 / G37) (Mycoplasmoides genitalium).